The primary structure comprises 89 residues: Putative protein T-ENOL (89 aa).

Disordered regions lie at residues 1 to 31 (MAST…KASL) and 54 to 89 (RSHM…TDTR).

Specifically expressed in testis (at protein level).

This chain is Putative protein T-ENOL, found in Rattus norvegicus (Rat).